The chain runs to 417 residues: NADH-quinone oxidoreductase subunit D (417 aa).

Belongs to the complex I 49 kDa subunit family. As to quaternary structure, NDH-1 is composed of 14 different subunits. Subunits NuoB, C, D, E, F, and G constitute the peripheral sector of the complex.

Its subcellular location is the cell membrane. The catalysed reaction is a quinone + NADH + 5 H(+)(in) = a quinol + NAD(+) + 4 H(+)(out). In terms of biological role, NDH-1 shuttles electrons from NADH, via FMN and iron-sulfur (Fe-S) centers, to quinones in the respiratory chain. The immediate electron acceptor for the enzyme in this species is believed to be ubiquinone. Couples the redox reaction to proton translocation (for every two electrons transferred, four hydrogen ions are translocated across the cytoplasmic membrane), and thus conserves the redox energy in a proton gradient. This Polynucleobacter asymbioticus (strain DSM 18221 / CIP 109841 / QLW-P1DMWA-1) (Polynucleobacter necessarius subsp. asymbioticus) protein is NADH-quinone oxidoreductase subunit D.